A 123-amino-acid chain; its full sequence is Highly acidic elicitin 20 (123 aa).

An N-terminal signal peptide occupies residues 1 to 20 (MQFTALFAATAVALVGSVSA). Cystine bridges form between Cys23–Cys91, Cys47–Cys76, and Cys71–Cys115.

The protein belongs to the elicitin family.

It localises to the secreted. Functionally, induces local and distal defense responses (incompatible hypersensitive reaction) in plants from the solanaceae and cruciferae families. Elicits leaf necrosis and causes the accumulation of pathogenesis-related proteins. Might interact with the lipidic molecules of the plasma membrane. This is Highly acidic elicitin 20 (B20) from Phytophthora cryptogea.